The sequence spans 800 residues: Cation/H(+) antiporter 9 (800 aa).

12 consecutive transmembrane segments (helical) span residues 43 to 63 (VIFGYALPLLELQIILIFVCI), 73 to 93 (IGIPRFVSNILAGLILGPQLL), 110 to 130 (NVALEGVARLGLVMFTFLMGV), 145 to 165 (IVIAVSSFFVTMISGLAFRNF), 186 to 206 (VIVSIQAVTLLPVITHLVYEL), 216 to 236 (IAISTAAVSDFLGFLTLVCIS), 247 to 267 (GIANRDIVALIILVLVILFIF), 287 to 306 (VYLYVTILTAIAASIYLSVF), 338 to 358 (LVTNIFFPISIAVMAMKADVV), 371 to 391 (ILLLGLTVVVKWTASFVPCLI), 401 to 421 (VIIATIMNYKGFVDLCFFDVA), and 430 to 450 (ATYTVMIIYVLLNAGILPTII).

It belongs to the monovalent cation:proton antiporter 2 (CPA2) transporter (TC 2.A.37) family. CHX (TC 2.A.37.4) subfamily.

The protein localises to the membrane. May operate as a cation/H(+) antiporter. This is Cation/H(+) antiporter 9 (CHX9) from Arabidopsis thaliana (Mouse-ear cress).